We begin with the raw amino-acid sequence, 374 residues long: Carbamoyl phosphate synthase small chain (374 aa).

Positions 1–186 (MTEHAILVLE…DRNECKRAAP (186 aa)) are CPSase. Serine 47, glycine 237, and glycine 239 together coordinate L-glutamine. In terms of domain architecture, Glutamine amidotransferase type-1 spans 189 to 374 (KVVAYDYGVK…RFITMMAAQS (186 aa)). Cysteine 265 functions as the Nucleophile in the catalytic mechanism. Residues leucine 266, glutamine 269, asparagine 307, glycine 309, and phenylalanine 310 each coordinate L-glutamine. Catalysis depends on residues histidine 349 and glutamate 351.

It belongs to the CarA family. As to quaternary structure, composed of two chains; the small (or glutamine) chain promotes the hydrolysis of glutamine to ammonia, which is used by the large (or ammonia) chain to synthesize carbamoyl phosphate. Tetramer of heterodimers (alpha,beta)4.

The enzyme catalyses hydrogencarbonate + L-glutamine + 2 ATP + H2O = carbamoyl phosphate + L-glutamate + 2 ADP + phosphate + 2 H(+). It catalyses the reaction L-glutamine + H2O = L-glutamate + NH4(+). The protein operates within amino-acid biosynthesis; L-arginine biosynthesis; carbamoyl phosphate from bicarbonate: step 1/1. It functions in the pathway pyrimidine metabolism; UMP biosynthesis via de novo pathway; (S)-dihydroorotate from bicarbonate: step 1/3. In terms of biological role, small subunit of the glutamine-dependent carbamoyl phosphate synthetase (CPSase). CPSase catalyzes the formation of carbamoyl phosphate from the ammonia moiety of glutamine, carbonate, and phosphate donated by ATP, constituting the first step of 2 biosynthetic pathways, one leading to arginine and/or urea and the other to pyrimidine nucleotides. The small subunit (glutamine amidotransferase) binds and cleaves glutamine to supply the large subunit with the substrate ammonia. The protein is Carbamoyl phosphate synthase small chain of Xylella fastidiosa (strain Temecula1 / ATCC 700964).